A 118-amino-acid chain; its full sequence is uncharacterized protein (118 aa).

This is an uncharacterized protein from Aquifex aeolicus (strain VF5).